Consider the following 152-residue polypeptide: Large ribosomal subunit protein uL13 (152 aa).

It belongs to the universal ribosomal protein uL13 family. Part of the 50S ribosomal subunit.

In terms of biological role, this protein is one of the early assembly proteins of the 50S ribosomal subunit, although it is not seen to bind rRNA by itself. It is important during the early stages of 50S assembly. In Neorickettsia sennetsu (strain ATCC VR-367 / Miyayama) (Ehrlichia sennetsu), this protein is Large ribosomal subunit protein uL13.